The primary structure comprises 181 residues: Protein Syd (181 aa).

It belongs to the Syd family.

The protein resides in the cell inner membrane. Interacts with the SecY protein in vivo. May bind preferentially to an uncomplexed state of SecY, thus functioning either as a chelating agent for excess SecY in the cell or as a regulatory factor that negatively controls the translocase function. This chain is Protein Syd, found in Escherichia coli (strain K12 / DH10B).